The sequence spans 439 residues: ATP-dependent RNA helicase SrmB (439 aa).

Positions 4-32 (SQFEQFDLSPELLKALEKKGYSRPTAIQM) match the Q motif motif. Residues 35-209 (IPAAMEESDV…AERLLNDPVK (175 aa)) enclose the Helicase ATP-binding domain. An ATP-binding site is contributed by 48 to 55 (APTGTGKT). The short motif at 157 to 160 (DEAD) is the DEAD box element. The region spanning 237 to 387 (KLLARFIETE…GLEPRTKPPK (151 aa)) is the Helicase C-terminal domain. Residues 381–393 (PRTKPPKDGEVKS) show a composition bias toward basic and acidic residues. The segment at 381–439 (PRTKPPKDGEVKSVSKKQKARIKEKREEKKKTEAKKKVKLRHKDTKNIGKRRKPSNSNV) is disordered. 2 stretches are compositionally biased toward basic residues: residues 394 to 403 (VSKKQKARIK) and 412 to 439 (TEAK…NSNV).

Belongs to the DEAD box helicase family. SrmB subfamily. Interacts with the 50S ribosomal subunit.

It localises to the cytoplasm. It carries out the reaction ATP + H2O = ADP + phosphate + H(+). DEAD-box RNA helicase involved in the assembly of the 50S ribosomal subunit at low temperature. Exhibits RNA-stimulated ATP hydrolysis and RNA unwinding activity. The protein is ATP-dependent RNA helicase SrmB of Haemophilus influenzae (strain ATCC 51907 / DSM 11121 / KW20 / Rd).